Consider the following 295-residue polypeptide: Transcription factor bHLH19 (295 aa).

The region spanning Val-115 to Leu-164 is the bHLH domain.

Homodimer. In terms of tissue distribution, expressed in roots and leaves.

The protein resides in the nucleus. In Arabidopsis thaliana (Mouse-ear cress), this protein is Transcription factor bHLH19 (BHLH19).